Reading from the N-terminus, the 317-residue chain is UV DNA damage endonuclease (317 aa).

Belongs to the uve1/UvsE family.

Its function is as follows. Component in a DNA repair pathway. Removal of UV LIGHT damaged nucleotides. Recognizes pyrimidine dimers and cleave a phosphodiester bond immediately 5' to the lesion. This chain is UV DNA damage endonuclease, found in Bacillus cereus (strain G9842).